Reading from the N-terminus, the 279-residue chain is Lyso-glycine lipid O-acyltransferase (279 aa).

The protein belongs to the O-acyltransferase GlsA family.

It carries out the reaction a lyso-glycine lipid + a fatty acyl-[ACP] = a glycine lipid + holo-[ACP]. It catalyses the reaction N-[(3R)-3-hydroxyhexadecanoyl]-glycine + hexadecanoyl-[ACP] = N-[(3R)-3-(hexadecanoyloxy)hexadecanoyl]-glycine + holo-[ACP]. Its pathway is lipid metabolism. Is involved in the production of glycine lipids (GL), which are phosphorus-free membrane lipids. Catalyzes the second step of GL biosynthesis, i.e. the O-acylation of the hydroxyl group of lyso-glycine lipids, resulting in the production of the mature diacylated glycine lipids. The sequence is that of Lyso-glycine lipid O-acyltransferase from Phocaeicola vulgatus (strain ATCC 8482 / DSM 1447 / JCM 5826 / CCUG 4940 / NBRC 14291 / NCTC 11154) (Bacteroides vulgatus).